The sequence spans 215 residues: Riboflavin synthase (215 aa).

2 Lumazine-binding repeats span residues 1 to 96 (MFTG…FGGH) and 97 to 193 (IVSG…EQFL). 2,4-dihydroxypteridine contacts are provided by residues 4 to 6 (GII), 47 to 49 (CLT), 61 to 66 (DVMSET), 100 to 102 (GHI), Lys135, 144 to 146 (SLT), and 158 to 163 (SIIPHT).

As to quaternary structure, homotrimer.

It catalyses the reaction 2 6,7-dimethyl-8-(1-D-ribityl)lumazine + H(+) = 5-amino-6-(D-ribitylamino)uracil + riboflavin. It participates in cofactor biosynthesis; riboflavin biosynthesis; riboflavin from 2-hydroxy-3-oxobutyl phosphate and 5-amino-6-(D-ribitylamino)uracil: step 2/2. Its function is as follows. Catalyzes the dismutation of two molecules of 6,7-dimethyl-8-ribityllumazine, resulting in the formation of riboflavin and 5-amino-6-(D-ribitylamino)uracil. This Actinobacillus pleuropneumoniae (Haemophilus pleuropneumoniae) protein is Riboflavin synthase (ribE).